We begin with the raw amino-acid sequence, 357 residues long: Probable dual-specificity RNA methyltransferase RlmN (357 aa).

The active-site Proton acceptor is the Glu-95. Residues 106 to 340 enclose the Radical SAM core domain; it reads NRDRHTVCVS…VSVREEKGTD (235 aa). The cysteines at positions 113 and 345 are disulfide-linked. 3 residues coordinate [4Fe-4S] cluster: Cys-120, Cys-124, and Cys-127. Residues 172–173, Ser-204, 227–229, and Asn-302 contribute to the S-adenosyl-L-methionine site; these read GE and SLH. Cys-345 (S-methylcysteine intermediate) is an active-site residue.

Belongs to the radical SAM superfamily. RlmN family. The cofactor is [4Fe-4S] cluster.

It localises to the cytoplasm. It carries out the reaction adenosine(2503) in 23S rRNA + 2 reduced [2Fe-2S]-[ferredoxin] + 2 S-adenosyl-L-methionine = 2-methyladenosine(2503) in 23S rRNA + 5'-deoxyadenosine + L-methionine + 2 oxidized [2Fe-2S]-[ferredoxin] + S-adenosyl-L-homocysteine. The enzyme catalyses adenosine(37) in tRNA + 2 reduced [2Fe-2S]-[ferredoxin] + 2 S-adenosyl-L-methionine = 2-methyladenosine(37) in tRNA + 5'-deoxyadenosine + L-methionine + 2 oxidized [2Fe-2S]-[ferredoxin] + S-adenosyl-L-homocysteine. In terms of biological role, specifically methylates position 2 of adenine 2503 in 23S rRNA and position 2 of adenine 37 in tRNAs. In Desulfitobacterium hafniense (strain Y51), this protein is Probable dual-specificity RNA methyltransferase RlmN.